Consider the following 883-residue polypeptide: Aryl hydrocarbon receptor (883 aa).

Residues 1–9 (MSSGANITY) constitute a propeptide that is removed on maturation. Positions 1 to 38 (MSSGANITYASRKRRKPVQKTVKPIPAEGIKSNPSKRH) are disordered. Short sequence motifs (nuclear localization signal) lie at residues 12-15 (RKRR) and 36-41 (KRHRDR). One can recognise a bHLH domain in the interval 26–79 (PAEGIKSNPSKRHRDRLNTELDRLASLLPFPQDVINKLDKLSVLRLSVSYLRAK). Residues 37 to 65 (RHRDRLNTELDRLASLLPFPQDVINKLDK) are DNA-binding. Required for maintaining the overall integrity of the AHR:ARNT heterodimer and its transcriptional activity regions lie at residues 49 to 81 (LASLLPFPQDVINKLDKLSVLRLSVSYLRAKSF), 116 to 124 (LLQALNGFV), and 260 to 262 (FAI). The short motif at 63 to 71 (LDKLSVLRL) is the Nuclear export signal element. One can recognise a PAS 1 domain in the interval 111 to 175 (QEGEFLLQAL…AEFQRQLHWA (65 aa)). The PAS 2 domain occupies 266 to 336 (LQPPSILEIR…CAESHIRMIK (71 aa)). The PAC domain occupies 342–383 (MTVFRLLAKHSRWRWVQSNARLIYRNGRPDYIIATQRPLTDE). Residues 421–449 (LPIRTKSNTSRKDWAPQSTPSKDSFHPSS) are disordered. The span at 436–449 (PQSTPSKDSFHPSS) shows a compositional bias: polar residues.

In terms of assembly, homodimer. Heterodimer; efficient DNA binding requires dimerization with another bHLH protein. Interacts with ARNT; the heterodimer ARNT:AHR binds to core DNA sequence 5'-TGCGTG-3' within the dioxin response element (DRE) of target gene promoters and activates their transcription. Binds MYBBP1A. Interacts with coactivators including SRC-1, RIP140 and NOCA7, and with the corepressor SMRT. Interacts with NEDD8 and IVNS1ABP. Interacts with BMAL1. Interacts with HSP90AB1. Interacts with TIPARP; leading to mono-ADP-ribosylation of AHR and subsequent inhibition of AHR. Mono-ADP-ribosylated, leading to inhibit transcription activator activity of AHR.

The protein localises to the cytoplasm. Its subcellular location is the nucleus. In terms of biological role, ligand-activated transcription factor that enables cells to adapt to changing conditions by sensing compounds from the environment, diet, microbiome and cellular metabolism, and which plays important roles in development, immunity and cancer. Upon ligand binding, translocates into the nucleus, where it heterodimerizes with ARNT and induces transcription by binding to xenobiotic response elements (XRE). Regulates a variety of biological processes, including angiogenesis, hematopoiesis, drug and lipid metabolism, cell motility and immune modulation. Xenobiotics can act as ligands: upon xenobiotic-binding, activates the expression of multiple phase I and II xenobiotic chemical metabolizing enzyme genes (such as the CYP1A1 gene). Mediates biochemical and toxic effects of halogenated aromatic hydrocarbons. Next to xenobiotics, natural ligands derived from plants, microbiota, and endogenous metabolism are potent AHR agonists. Tryptophan (Trp) derivatives constitute an important class of endogenous AHR ligands. Acts as a negative regulator of anti-tumor immunity: indoles and kynurenic acid generated by Trp catabolism act as ligand and activate AHR, thereby promoting AHR-driven cancer cell motility and suppressing adaptive immunity. Regulates the circadian clock by inhibiting the basal and circadian expression of the core circadian component PER1. Inhibits PER1 by repressing the CLOCK-BMAL1 heterodimer mediated transcriptional activation of PER1. The heterodimer ARNT:AHR binds to core DNA sequence 5'-TGCGTG-3' within the dioxin response element (DRE) of target gene promoters and activates their transcription. The sequence is that of Aryl hydrocarbon receptor (Ahr) from Mus musculus molossinus (Japanese house mouse).